The chain runs to 331 residues: Light-harvesting complex I LH35 proteins (331 aa).

It localises to the plastid. It is found in the chloroplast. The protein is Light-harvesting complex I LH35 proteins of Euglena gracilis.